Consider the following 323-residue polypeptide: Aldo-keto reductase family 1 member C1 (323 aa).

NADP(+)-binding positions include 20–24 and Asp50; that span reads GFGTY. Residue Tyr24 coordinates substrate. Tyr55 acts as the Proton donor in catalysis. His117 provides a ligand contact to substrate. NADP(+) contacts are provided by residues 166–167, Gln190, and 216–222; these read SN and YSALGSH. Substrate is bound by residues His222 and Trp227. 270-280 is a binding site for NADP(+); it reads KSYNEQRIREN.

The protein belongs to the aldo/keto reductase family. In terms of assembly, monomer. As to expression, expressed in liver, adrenal gland, intestine and kidney.

The protein resides in the cytoplasm. The protein localises to the cytosol. The catalysed reaction is a 3alpha-hydroxysteroid + NADP(+) = a 3-oxosteroid + NADPH + H(+). The enzyme catalyses a 3alpha-hydroxysteroid + NAD(+) = a 3-oxosteroid + NADH + H(+). It carries out the reaction (17R,20S)-17,20-dihydroxypregn-4-en-3-one + NADP(+) = 17alpha-hydroxyprogesterone + NADPH + H(+). It catalyses the reaction (17R,20S)-17,20-dihydroxypregn-4-en-3-one + NAD(+) = 17alpha-hydroxyprogesterone + NADH + H(+). The catalysed reaction is (20S)-hydroxypregn-4-en-3-one + NADP(+) = progesterone + NADPH + H(+). The enzyme catalyses (20S)-hydroxypregn-4-en-3-one + NAD(+) = progesterone + NADH + H(+). It carries out the reaction (1R,2R)-1,2-dihydrobenzene-1,2-diol + NADP(+) = catechol + NADPH + H(+). It catalyses the reaction (S)-indan-1-ol + NAD(+) = indan-1-one + NADH + H(+). The catalysed reaction is (S)-indan-1-ol + NADP(+) = indan-1-one + NADPH + H(+). The enzyme catalyses 5alpha-androstane-3alpha,17beta-diol + NADP(+) = 17beta-hydroxy-5alpha-androstan-3-one + NADPH + H(+). It carries out the reaction 5alpha-androstane-3beta,17beta-diol + NADP(+) = 17beta-hydroxy-5alpha-androstan-3-one + NADPH + H(+). It catalyses the reaction 5alpha-androstane-3alpha,17beta-diol + NAD(+) = 17beta-hydroxy-5alpha-androstan-3-one + NADH + H(+). The catalysed reaction is 17beta-hydroxy-5alpha-androstan-3-one + NADP(+) = 5alpha-androstan-3,17-dione + NADPH + H(+). The enzyme catalyses androsterone + NADP(+) = 5alpha-androstan-3,17-dione + NADPH + H(+). It carries out the reaction androsterone + NADPH + H(+) = 5alpha-androstane-3alpha,17beta-diol + NADP(+). It catalyses the reaction 5alpha-androstane-3alpha,17beta-diol + NAD(+) = androsterone + NADH + H(+). The catalysed reaction is 17beta-estradiol + NADP(+) = estrone + NADPH + H(+). The enzyme catalyses 17beta-estradiol + NAD(+) = estrone + NADH + H(+). It carries out the reaction testosterone + NADP(+) = androst-4-ene-3,17-dione + NADPH + H(+). It catalyses the reaction 20alpha-hydroxy-5beta-pregnan-3-one + NADP(+) = 5beta-pregnan-3,20-dione + NADPH + H(+). The catalysed reaction is 3beta-hydroxy-5beta-pregnane-20-one + NADP(+) = 5beta-pregnan-3,20-dione + NADPH + H(+). The enzyme catalyses 3beta-hydroxy-5beta-pregnane-20-one + NADPH + H(+) = 3beta,20alpha-dihydroxy-5beta-pregnane + NADP(+). It carries out the reaction (3beta,5alpha,17beta)-3-hydroxyandrostan-17-yl sulfate + NADP(+) = 5alpha-dihydrotestosterone sulfate + NADPH + H(+). Its pathway is steroid metabolism. Functionally, cytosolic aldo-keto reductase that catalyzes the NADH and NADPH-dependent reduction of ketosteroids to hydroxysteroids. Most probably acts as a reductase in vivo since the oxidase activity measured in vitro is inhibited by physiological concentrations of NADPH. Displays a broad positional specificity acting on positions 3, 17 and 20 of steroids and regulates the metabolism of hormones like estrogens and androgens. May also reduce conjugated steroids such as 5alpha-dihydrotestosterone sulfate. Displays affinity for bile acids. The sequence is that of Aldo-keto reductase family 1 member C1 (AKR1C1) from Macaca fuscata fuscata (Japanese macaque).